A 168-amino-acid chain; its full sequence is G/U mismatch-specific DNA glycosylase (168 aa).

This sequence belongs to the uracil-DNA glycosylase (UDG) superfamily. TDG/mug family. Binds DNA as a monomer.

Its subcellular location is the cytoplasm. It catalyses the reaction Specifically hydrolyzes mismatched double-stranded DNA and polynucleotides, releasing free uracil.. Its function is as follows. Excises ethenocytosine and uracil, which can arise by alkylation or deamination of cytosine, respectively, from the corresponding mispairs with guanine in ds-DNA. It is capable of hydrolyzing the carbon-nitrogen bond between the sugar-phosphate backbone of the DNA and the mispaired base. The complementary strand guanine functions in substrate recognition. Required for DNA damage lesion repair in stationary-phase cells. The sequence is that of G/U mismatch-specific DNA glycosylase from Escherichia coli O9:H4 (strain HS).